A 915-amino-acid chain; its full sequence is MVDQRRSALGFVLLLLCLVLFFDCVVVGQTQSRFSEKLILLNLRSSLGLRGTDWPIKGDPCVDWRGIQCENGSIIGINISGFRRTRIGKLNPQFSVDPLRNLTRLSYFNASGLALPGTIPEWFGVSLLALEVLDLSSCSVNGVVPFTLGNLTSLRTLNLSQNSLTSLVPSSLGQLLNLSQLDLSRNSFTGVLPQSFSSLKNLLTLDVSSNYLTGPIPPGLGALSKLIHLNFSSNSFSSPIPSELGDLVNLVDFDLSINSLSGSVPQELRKLSKLQLMAIGDNLLSGTLPVDLFSAESQLQTLVLRENGFSGSLPDVCWSLPKLRILDIAKNNFTGLLPYSSYDSDQIAEMVDISSNTFYGELTPILRRFRIMDLSGNYFEGKLPDYVTGENVSVTSNCLRNERRQKPSAICAAFYKSRGLDFDDFGRPNLTQPTSKNASSGISRRTVIILAAVGGGVAFILLFVILPIILVLCMRHRRRAAQRGNNDRPKPAGEASQQPPKGAQTFDLSRLGNAFSYEQLLQATEEFNDANLIKRGHSGNLFRGFLENGIPVVIKKIDVREGKSEGYISELELFSKAGHQRLVPFLGHCLENESQKFLVYKFMRHGDLASSLFRKSENEGDGLKSLDWITRLKIALGAAEGLSYLHHECSPPLVHRDVQASSILLDDKFEVRLGSLSEAYAQGDAYQSRISRLLRLPQSSEPSSSGVTNAICSYDVYCFGKVLLELVTGKLGISSPDNALAKEYMEEALPYISTNEKELVTKILDPSLMVDEDLLEEVWAMAIIAKSCLNPKPTRRPLMRHIVNALENPLKVVREDTNSGSGSSRLRTNSSRGSWNAAIFGSWRQSASDVTAVQAGATTSGGGGGGGGNGLRNSGSQGSSGRNNNNNGNSSSSRRRQSSEIVPEPAAYGVVEDNL.

The first 28 residues, 1 to 28, serve as a signal peptide directing secretion; that stretch reads MVDQRRSALGFVLLLLCLVLFFDCVVVG. At 29 to 451 the chain is on the extracellular side; the sequence is QTQSRFSEKL…ISRRTVIILA (423 aa). N-linked (GlcNAc...) asparagine glycans are attached at residues N71, N78, N101, N109, N150, N158, and N177. LRR repeat units lie at residues 102-125, 127-150, 151-174, 176-198, 199-223, 225-247, 248-271, 272-295, 297-320, 321-344, and 366-390; these read LTRLSYFNASGLALPGTIPEWFGV, LLALEVLDLSSCSVNGVVPFTLGN, LTSLRTLNLSQNSLTSLVPSSLGQ, LNLSQLDLSRNSFTGVLPQSFSS, LKNLLTLDVSSNYLTGPIPPGLGAL, KLIHLNFSSNSFSSPIPSELGDL, VNLVDFDLSINSLSGSVPQELRKL, SKLQLMAIGDNLLSGTLPVDLFSA, SQLQTLVLRENGFSGSLPDVCWSL, PKLRILDIAKNNFTGLLPYSSYDS, and LRRFRIMDLSGNYFEGKLPDYVTGE. N-linked (GlcNAc...) asparagine glycosylation occurs at N230. The N-linked (GlcNAc...) asparagine glycan is linked to N332. N-linked (GlcNAc...) asparagine glycans are attached at residues N391, N429, and N437. A helical transmembrane segment spans residues 452-472; it reads AVGGGVAFILLFVILPIILVL. Residues 473–915 are Cytoplasmic-facing; the sequence is CMRHRRRAAQ…AAYGVVEDNL (443 aa). The disordered stretch occupies residues 482 to 503; it reads QRGNNDRPKPAGEASQQPPKGA. A Protein kinase domain is found at 527–811; sequence FNDANLIKRG…IVNALENPLK (285 aa). Residues 533 to 541 and K555 each bind ATP; that span reads IKRGHSGNL. Catalysis depends on D657, which acts as the Proton acceptor. Residues 851-915 form a disordered region; it reads TAVQAGATTS…AAYGVVEDNL (65 aa). Residues 859 to 870 are compositionally biased toward gly residues; sequence TSGGGGGGGGNG. A compositionally biased stretch (low complexity) spans 871–892; sequence LRNSGSQGSSGRNNNNNGNSSS.

Belongs to the protein kinase superfamily. Ser/Thr protein kinase family.

Its subcellular location is the membrane. It catalyses the reaction L-seryl-[protein] + ATP = O-phospho-L-seryl-[protein] + ADP + H(+). The enzyme catalyses L-threonyl-[protein] + ATP = O-phospho-L-threonyl-[protein] + ADP + H(+). The polypeptide is Probable LRR receptor-like serine/threonine-protein kinase At2g16250 (Arabidopsis thaliana (Mouse-ear cress)).